Consider the following 140-residue polypeptide: Profilin-1 (140 aa).

Ala2 carries the post-translational modification N-acetylalanine. Ser28 is subject to Phosphoserine. Lys54 is covalently cross-linked (Glycyl lysine isopeptide (Lys-Gly) (interchain with G-Cter in SUMO2); alternate). Lys54 participates in a covalent cross-link: Glycyl lysine isopeptide (Lys-Gly) (interchain with G-Cter in ubiquitin); alternate. Position 57 is a phosphoserine (Ser57). N6-acetyllysine is present on Lys108. Tyr129 carries the phosphotyrosine modification. Phosphoserine; by ROCK1 is present on Ser138.

It belongs to the profilin family. As to quaternary structure, found in a complex with XPO6, Ran, ACTB and PFN1. Interacts with ACTB. Interacts with VASP. Interacts with HTT. Interacts with SH3BGRL. Occurs in many kinds of cells as a complex with monomeric actin in a 1:1 ratio. Interacts with ACTMAP. In terms of processing, phosphorylation at Ser-138 reduces its affinity for G-actin and blocks its interaction with HTT, reducing its ability to inhibit androgen receptor (AR) and HTT aggregation.

It is found in the cytoplasm. Its subcellular location is the cytoskeleton. In terms of biological role, binds to actin and affects the structure of the cytoskeleton. At high concentrations, profilin prevents the polymerization of actin, whereas it enhances it at low concentrations. By binding to PIP2, it inhibits the formation of IP3 and DG. Inhibits androgen receptor (AR) and HTT aggregation and binding of G-actin is essential for its inhibition of AR. The protein is Profilin-1 (Pfn1) of Mus musculus (Mouse).